Here is a 254-residue protein sequence, read N- to C-terminus: Stem 28 kDa glycoprotein (254 aa).

Positions 1–21 (MKMKVLVFFVATILVAWQCHA) are cleaved as a signal peptide. Residues 22-34 (YDMFPLRMNTGYG) constitute a propeptide that is removed on maturation. N-linked (GlcNAc...) asparagine glycosylation occurs at Asn129.

This sequence belongs to the APS1/VSP family. Accumulates in the stems of developing soybean seedlings.

In terms of biological role, may function as somatic storage protein during early seedling development. The protein is Stem 28 kDa glycoprotein (VSPA) of Glycine max (Soybean).